Here is a 132-residue protein sequence, read N- to C-terminus: Replication enhancer protein (132 aa).

Belongs to the geminiviridae replication enhancer protein family. Homooligomer. Interacts with the replication-associated protein (REP). Interacts with host proliferating cell nuclear antigen (PCNA). Interacts with host retinoblastoma-related protein 1 (RBR1), and may thereby deregulate the host cell cycle. Oligomerization and interaction with PCNA are necessary for optimal replication enhancement.

Functionally, increases viral DNA accumulation. Enhances infectivity and symptom expression. This is Replication enhancer protein from Abutilon (Upland cotton).